The chain runs to 412 residues: Imidazolonepropionase (412 aa).

Residues H76 and H78 each contribute to the Fe(3+) site. 2 residues coordinate Zn(2+): H76 and H78. 4-imidazolone-5-propanoate is bound by residues R85, Y148, and H181. Residue Y148 participates in N-formimidoyl-L-glutamate binding. Fe(3+) is bound at residue H242. H242 provides a ligand contact to Zn(2+). E245 contacts 4-imidazolone-5-propanoate. D317 serves as a coordination point for Fe(3+). D317 lines the Zn(2+) pocket. Residues N319 and G321 each contribute to the N-formimidoyl-L-glutamate site. S322 lines the 4-imidazolone-5-propanoate pocket.

This sequence belongs to the metallo-dependent hydrolases superfamily. HutI family. Zn(2+) is required as a cofactor. The cofactor is Fe(3+).

The protein localises to the cytoplasm. The catalysed reaction is 4-imidazolone-5-propanoate + H2O = N-formimidoyl-L-glutamate. The protein operates within amino-acid degradation; L-histidine degradation into L-glutamate; N-formimidoyl-L-glutamate from L-histidine: step 3/3. Catalyzes the hydrolytic cleavage of the carbon-nitrogen bond in imidazolone-5-propanoate to yield N-formimidoyl-L-glutamate. It is the third step in the universal histidine degradation pathway. This is Imidazolonepropionase from Staphylococcus aureus (strain Mu50 / ATCC 700699).